The chain runs to 310 residues: Delta(1)-pyrroline-2-carboxylate reductase 1 (310 aa).

This sequence belongs to the ornithine cyclodeaminase/mu-crystallin family.

It catalyses the reaction L-proline + NAD(+) = 1-pyrroline-2-carboxylate + NADH + H(+). It carries out the reaction L-proline + NADP(+) = 1-pyrroline-2-carboxylate + NADPH + H(+). Its function is as follows. Catalyzes the reduction of Delta(1)-pyrroline-2-carboxylate (Pyr2C) to L-proline, using NADPH as the electron donor. May be involved in a degradation pathway that converts trans-3-hydroxy-L-proline (t3LHyp) to L-proline. The sequence is that of Delta(1)-pyrroline-2-carboxylate reductase 1 from Burkholderia multivorans (strain ATCC 17616 / 249).